A 399-amino-acid chain; its full sequence is CCA-adding enzyme (399 aa).

Residues Gly32 and Arg35 each contribute to the ATP site. 2 residues coordinate CTP: Gly32 and Arg35. The Mg(2+) site is built by Asp45 and Asp47. ATP-binding residues include Arg116, Asp159, Arg162, Arg165, and Arg168. Residues Arg116, Asp159, Arg162, Arg165, and Arg168 each contribute to the CTP site.

This sequence belongs to the tRNA nucleotidyltransferase/poly(A) polymerase family. Bacterial CCA-adding enzyme type 3 subfamily. As to quaternary structure, homodimer. Mg(2+) serves as cofactor.

The enzyme catalyses a tRNA precursor + 2 CTP + ATP = a tRNA with a 3' CCA end + 3 diphosphate. The catalysed reaction is a tRNA with a 3' CCA end + 2 CTP + ATP = a tRNA with a 3' CCACCA end + 3 diphosphate. Its function is as follows. Catalyzes the addition and repair of the essential 3'-terminal CCA sequence in tRNAs without using a nucleic acid template. Adds these three nucleotides in the order of C, C, and A to the tRNA nucleotide-73, using CTP and ATP as substrates and producing inorganic pyrophosphate. tRNA 3'-terminal CCA addition is required both for tRNA processing and repair. Also involved in tRNA surveillance by mediating tandem CCA addition to generate a CCACCA at the 3' terminus of unstable tRNAs. While stable tRNAs receive only 3'-terminal CCA, unstable tRNAs are marked with CCACCA and rapidly degraded. In Streptococcus pneumoniae serotype 4 (strain ATCC BAA-334 / TIGR4), this protein is CCA-adding enzyme.